A 156-amino-acid chain; its full sequence is Protein-export protein SecB (156 aa).

Belongs to the SecB family. Homotetramer, a dimer of dimers. One homotetramer interacts with 1 SecA dimer.

Its subcellular location is the cytoplasm. One of the proteins required for the normal export of preproteins out of the cell cytoplasm. It is a molecular chaperone that binds to a subset of precursor proteins, maintaining them in a translocation-competent state. It also specifically binds to its receptor SecA. The sequence is that of Protein-export protein SecB from Desulfotalea psychrophila (strain LSv54 / DSM 12343).